A 350-amino-acid chain; its full sequence is Protein RecA (350 aa).

Residue 66 to 73 (GPESSGKT) coordinates ATP.

This sequence belongs to the RecA family.

Its subcellular location is the cytoplasm. Its function is as follows. Can catalyze the hydrolysis of ATP in the presence of single-stranded DNA, the ATP-dependent uptake of single-stranded DNA by duplex DNA, and the ATP-dependent hybridization of homologous single-stranded DNAs. It interacts with LexA causing its activation and leading to its autocatalytic cleavage. The protein is Protein RecA of Dichelobacter nodosus (strain VCS1703A).